A 497-amino-acid chain; its full sequence is Probable cytosol aminopeptidase (497 aa).

Mn(2+) is bound by residues Lys263 and Asp268. Lys275 is a catalytic residue. Asp286, Asp345, and Glu347 together coordinate Mn(2+). Residue Arg349 is part of the active site.

The protein belongs to the peptidase M17 family. Requires Mn(2+) as cofactor.

Its subcellular location is the cytoplasm. It catalyses the reaction Release of an N-terminal amino acid, Xaa-|-Yaa-, in which Xaa is preferably Leu, but may be other amino acids including Pro although not Arg or Lys, and Yaa may be Pro. Amino acid amides and methyl esters are also readily hydrolyzed, but rates on arylamides are exceedingly low.. The catalysed reaction is Release of an N-terminal amino acid, preferentially leucine, but not glutamic or aspartic acids.. Presumably involved in the processing and regular turnover of intracellular proteins. Catalyzes the removal of unsubstituted N-terminal amino acids from various peptides. The polypeptide is Probable cytosol aminopeptidase (Brucella ovis (strain ATCC 25840 / 63/290 / NCTC 10512)).